The chain runs to 2183 residues: DNA polymerase epsilon catalytic subunit A (2183 aa).

Positions 2066, 2069, 2090, and 2093 each coordinate Zn(2+). The segment at 2066-2093 (CFKCKNPCDLDLCKDSCCTKSGFRCPLC) adopts a CysA-type zinc-finger fold. The [4Fe-4S] cluster site is built by Cys2124, Cys2127, Cys2139, and Cys2141. Positions 2124-2141 (CDKCRRVKEYELTEFCPC) match the CysB motif motif.

The protein belongs to the DNA polymerase type-B family. Heterotetramer. Consists of 4 subunits: POL2, DPB2, DPB3 and DPB4. The cofactor is [4Fe-4S] cluster.

Its subcellular location is the nucleus. The catalysed reaction is DNA(n) + a 2'-deoxyribonucleoside 5'-triphosphate = DNA(n+1) + diphosphate. In terms of biological role, DNA polymerase II participates in chromosomal DNA replication. The chain is DNA polymerase epsilon catalytic subunit A (POL2) from Yarrowia lipolytica (strain CLIB 122 / E 150) (Yeast).